The primary structure comprises 90 residues: WAP four-disulfide core domain protein 12 (90 aa).

The N-terminal stretch at 1–23 (MGSSSFLVLMVSLALVTLVAVEG) is a signal peptide. Residues 27 to 74 (GIEKAGVCPADNVRCFKSDPPQCHTDQDCLGERKCCYLHCGFKCVIPV) enclose the WAP domain. Intrachain disulfides connect cysteine 34–cysteine 62, cysteine 41–cysteine 66, cysteine 49–cysteine 61, and cysteine 55–cysteine 70.

The protein resides in the secreted. Antibacterial protein. Putative acid-stable proteinase inhibitor. This chain is WAP four-disulfide core domain protein 12 (WFDC12), found in Pongo abelii (Sumatran orangutan).